The primary structure comprises 83 residues: Small ribosomal subunit protein bS20 (83 aa).

It belongs to the bacterial ribosomal protein bS20 family.

In terms of biological role, binds directly to 16S ribosomal RNA. The sequence is that of Small ribosomal subunit protein bS20 from Flavobacterium psychrophilum (strain ATCC 49511 / DSM 21280 / CIP 103535 / JIP02/86).